A 135-amino-acid chain; its full sequence is Global transcriptional regulator Spx 2 (135 aa).

The active site involves C10.

Belongs to the ArsC family. Spx subfamily. In terms of assembly, interacts with the C-terminal domain of the alpha subunit of the RNAP.

Its subcellular location is the cytoplasm. Global transcriptional regulator that plays a key role in stress response and exerts either positive or negative regulation of genes. Acts by interacting with the C-terminal domain of the alpha subunit of the RNA polymerase (RNAP). This interaction can enhance binding of RNAP to the promoter region of target genes and stimulate their transcription, or block interaction of RNAP with activator. The sequence is that of Global transcriptional regulator Spx 2 from Oceanobacillus iheyensis (strain DSM 14371 / CIP 107618 / JCM 11309 / KCTC 3954 / HTE831).